A 190-amino-acid chain; its full sequence is MLDFIKGKVITVKPDKIVIQTGGIGYSVKIPIRVSRYINRDEETQIFTSLIVKEESIEIYGFLESSERDLFEELIKIAGIGPKMAINILSTYDRETLYKIIDHEDIKSLSKIPGIGKKTAQRILLELRGILPSLQYEKDQKYDDILSALLNLGYKRLEAKEVLDKIYNNEKDEATIIRESLSILAGKDGK.

The tract at residues 1 to 63 is domain I; it reads MLDFIKGKVI…EESIEIYGFL (63 aa). The segment at 64 to 139 is domain II; that stretch reads ESSERDLFEE…ILPSLQYEKD (76 aa). A region of interest (flexible linker) is located at residue Asp-139. The interval 139–190 is domain III; the sequence is DQKYDDILSALLNLGYKRLEAKEVLDKIYNNEKDEATIIRESLSILAGKDGK.

This sequence belongs to the RuvA family. As to quaternary structure, homotetramer. Forms an RuvA(8)-RuvB(12)-Holliday junction (HJ) complex. HJ DNA is sandwiched between 2 RuvA tetramers; dsDNA enters through RuvA and exits via RuvB. An RuvB hexamer assembles on each DNA strand where it exits the tetramer. Each RuvB hexamer is contacted by two RuvA subunits (via domain III) on 2 adjacent RuvB subunits; this complex drives branch migration. In the full resolvosome a probable DNA-RuvA(4)-RuvB(12)-RuvC(2) complex forms which resolves the HJ.

Its subcellular location is the cytoplasm. Its function is as follows. The RuvA-RuvB-RuvC complex processes Holliday junction (HJ) DNA during genetic recombination and DNA repair, while the RuvA-RuvB complex plays an important role in the rescue of blocked DNA replication forks via replication fork reversal (RFR). RuvA specifically binds to HJ cruciform DNA, conferring on it an open structure. The RuvB hexamer acts as an ATP-dependent pump, pulling dsDNA into and through the RuvAB complex. HJ branch migration allows RuvC to scan DNA until it finds its consensus sequence, where it cleaves and resolves the cruciform DNA. This chain is Holliday junction branch migration complex subunit RuvA, found in Thermodesulfovibrio yellowstonii (strain ATCC 51303 / DSM 11347 / YP87).